We begin with the raw amino-acid sequence, 220 residues long: Urease accessory protein UreG (220 aa).

18–25 (GPVGSGKT) provides a ligand contact to GTP.

It belongs to the SIMIBI class G3E GTPase family. UreG subfamily. Homodimer. UreD, UreF and UreG form a complex that acts as a GTP-hydrolysis-dependent molecular chaperone, activating the urease apoprotein by helping to assemble the nickel containing metallocenter of UreC. The UreE protein probably delivers the nickel.

It is found in the cytoplasm. Functionally, facilitates the functional incorporation of the urease nickel metallocenter. This process requires GTP hydrolysis, probably effectuated by UreG. The polypeptide is Urease accessory protein UreG (Yersinia pestis).